Reading from the N-terminus, the 94-residue chain is Pyrimidine/purine nucleoside phosphorylase (94 aa).

It belongs to the nucleoside phosphorylase PpnP family.

The enzyme catalyses a purine D-ribonucleoside + phosphate = a purine nucleobase + alpha-D-ribose 1-phosphate. It carries out the reaction adenosine + phosphate = alpha-D-ribose 1-phosphate + adenine. It catalyses the reaction cytidine + phosphate = cytosine + alpha-D-ribose 1-phosphate. The catalysed reaction is guanosine + phosphate = alpha-D-ribose 1-phosphate + guanine. The enzyme catalyses inosine + phosphate = alpha-D-ribose 1-phosphate + hypoxanthine. It carries out the reaction thymidine + phosphate = 2-deoxy-alpha-D-ribose 1-phosphate + thymine. It catalyses the reaction uridine + phosphate = alpha-D-ribose 1-phosphate + uracil. The catalysed reaction is xanthosine + phosphate = alpha-D-ribose 1-phosphate + xanthine. Catalyzes the phosphorolysis of diverse nucleosides, yielding D-ribose 1-phosphate and the respective free bases. Can use uridine, adenosine, guanosine, cytidine, thymidine, inosine and xanthosine as substrates. Also catalyzes the reverse reactions. This chain is Pyrimidine/purine nucleoside phosphorylase, found in Citrobacter koseri (strain ATCC BAA-895 / CDC 4225-83 / SGSC4696).